Here is a 360-residue protein sequence, read N- to C-terminus: Phosphoserine aminotransferase (360 aa).

An L-glutamate-binding site is contributed by R41. Pyridoxal 5'-phosphate-binding positions include 75–76 (GR), W101, T152, D172, and Q195. K196 carries the post-translational modification N6-(pyridoxal phosphate)lysine. Residue 237–238 (NT) participates in pyridoxal 5'-phosphate binding.

Belongs to the class-V pyridoxal-phosphate-dependent aminotransferase family. SerC subfamily. In terms of assembly, homodimer. Pyridoxal 5'-phosphate serves as cofactor.

The protein resides in the cytoplasm. It carries out the reaction O-phospho-L-serine + 2-oxoglutarate = 3-phosphooxypyruvate + L-glutamate. The enzyme catalyses 4-(phosphooxy)-L-threonine + 2-oxoglutarate = (R)-3-hydroxy-2-oxo-4-phosphooxybutanoate + L-glutamate. The protein operates within amino-acid biosynthesis; L-serine biosynthesis; L-serine from 3-phospho-D-glycerate: step 2/3. It participates in cofactor biosynthesis; pyridoxine 5'-phosphate biosynthesis; pyridoxine 5'-phosphate from D-erythrose 4-phosphate: step 3/5. Its function is as follows. Catalyzes the reversible conversion of 3-phosphohydroxypyruvate to phosphoserine and of 3-hydroxy-2-oxo-4-phosphonooxybutanoate to phosphohydroxythreonine. The protein is Phosphoserine aminotransferase of Pseudoalteromonas translucida (strain TAC 125).